The primary structure comprises 285 residues: 4-diphosphocytidyl-2-C-methyl-D-erythritol kinase (285 aa).

K12 is an active-site residue. 95-105 (PMGGGVGGGSS) is an ATP binding site. Residue D137 is part of the active site.

Belongs to the GHMP kinase family. IspE subfamily.

The enzyme catalyses 4-CDP-2-C-methyl-D-erythritol + ATP = 4-CDP-2-C-methyl-D-erythritol 2-phosphate + ADP + H(+). The protein operates within isoprenoid biosynthesis; isopentenyl diphosphate biosynthesis via DXP pathway; isopentenyl diphosphate from 1-deoxy-D-xylulose 5-phosphate: step 3/6. Catalyzes the phosphorylation of the position 2 hydroxy group of 4-diphosphocytidyl-2C-methyl-D-erythritol. The polypeptide is 4-diphosphocytidyl-2-C-methyl-D-erythritol kinase (Actinobacillus pleuropneumoniae serotype 7 (strain AP76)).